Here is a 310-residue protein sequence, read N- to C-terminus: Basic salivary proline-rich protein 4 (310 aa).

Positions 1 to 16 (MLLILLSVALLALSSA) are cleaved as a signal peptide. The disordered stretch occupies residues 14 to 310 (SSAESSSEDV…RPAQGQQPPQ (297 aa)). A run of 9 repeats spans residues 35–55 (KPEGRRPQGGNQPQRPPPPPG), 56–76 (KPQGPPPQGGNQSQGPPPPPG), 77–97 (KPEGRPPQGGNQSQGPPPHPG), 98–118 (KPERPPPQGGNQSQGPPPHPG), 119–139 (KPESRPPQGGHQSQGPPPTPG), 140–160 (KPEGPPPQGGNQSQGTPPPPG), 161–181 (KPEGRPPQGGNQSQGPPPHPG), 182–202 (KPERPPPQGGNQSHRPPPPPG), and 203–223 (KPERPPPQGGNQSQGPPPHPG). The interval 35–234 (KPEGRRPQGG…PEGPPPQEGN (200 aa)) is 9.5 X 21 AA tandem repeats of K-P-[EQ]-[GR]-[PR]-[PR]-P-Q-G-G-N-Q-[PS]-[QH]-[RG]-[PT]-P-P-[PH]-P-G. The segment covering 48-63 (QRPPPPPGKPQGPPPQ) has biased composition (pro residues). 3 N-linked (GlcNAc...) asparagine glycosylation sites follow: asparagine 66, asparagine 87, and asparagine 108. Over residues 133-147 (GPPPTPGKPEGPPPQ) the composition is skewed to pro residues. Asparagine 150, asparagine 171, and asparagine 192 each carry an N-linked (GlcNAc...) asparagine glycan. A compositionally biased stretch (pro residues) spans 196-210 (RPPPPPGKPERPPPQ). The N-linked (GlcNAc...) asparagine glycan is linked to asparagine 213. Over residues 217–231 (GPPPHPGKPEGPPPQ) the composition is skewed to pro residues. The stretch at 224–234 (KPEGPPPQEGN) is one 10; truncated repeat. The N-linked (GlcNAc...) asparagine glycan is linked to asparagine 234. The segment covering 258–310 (QGPPPPGKPQGPPPAGGNPQQPQAPPAGKPQGPPPPPQGGRPPRPAQGQQPPQ) has biased composition (pro residues).

N-glycosylated. Post-translationally, proteolytically cleaved at the tripeptide Xaa-Pro-Gln, where Xaa in the P(3) position is mostly lysine. The endoprotease may be of microbial origin. Pyroglutamate formation found on at least Gln-46, Gln-48, Gln-67, Gln-88; Gln-90; Gln-193; Gln-288 Gln-214 and Gln-295, preferentially in diabetic, and head and neck cancer patients.

It is found in the secreted. The polypeptide is Basic salivary proline-rich protein 4 (PRB4) (Homo sapiens (Human)).